The chain runs to 213 residues: Thiamine-phosphate synthase (213 aa).

Residues 40-44 and Asn-75 contribute to the 4-amino-2-methyl-5-(diphosphooxymethyl)pyrimidine site; that span reads QFREK. 2 residues coordinate Mg(2+): Asp-76 and Asp-95. Position 113 (Ser-113) interacts with 4-amino-2-methyl-5-(diphosphooxymethyl)pyrimidine. 2-[(2R,5Z)-2-carboxy-4-methylthiazol-5(2H)-ylidene]ethyl phosphate is bound at residue 139 to 141; it reads TPS. Lys-142 provides a ligand contact to 4-amino-2-methyl-5-(diphosphooxymethyl)pyrimidine. 2-[(2R,5Z)-2-carboxy-4-methylthiazol-5(2H)-ylidene]ethyl phosphate-binding positions include Gly-171 and 191–192; that span reads IS.

This sequence belongs to the thiamine-phosphate synthase family. Mg(2+) serves as cofactor.

It carries out the reaction 2-[(2R,5Z)-2-carboxy-4-methylthiazol-5(2H)-ylidene]ethyl phosphate + 4-amino-2-methyl-5-(diphosphooxymethyl)pyrimidine + 2 H(+) = thiamine phosphate + CO2 + diphosphate. It catalyses the reaction 2-(2-carboxy-4-methylthiazol-5-yl)ethyl phosphate + 4-amino-2-methyl-5-(diphosphooxymethyl)pyrimidine + 2 H(+) = thiamine phosphate + CO2 + diphosphate. The catalysed reaction is 4-methyl-5-(2-phosphooxyethyl)-thiazole + 4-amino-2-methyl-5-(diphosphooxymethyl)pyrimidine + H(+) = thiamine phosphate + diphosphate. It participates in cofactor biosynthesis; thiamine diphosphate biosynthesis; thiamine phosphate from 4-amino-2-methyl-5-diphosphomethylpyrimidine and 4-methyl-5-(2-phosphoethyl)-thiazole: step 1/1. In terms of biological role, condenses 4-methyl-5-(beta-hydroxyethyl)thiazole monophosphate (THZ-P) and 2-methyl-4-amino-5-hydroxymethyl pyrimidine pyrophosphate (HMP-PP) to form thiamine monophosphate (TMP). The chain is Thiamine-phosphate synthase from Staphylococcus aureus (strain MSSA476).